A 474-amino-acid chain; its full sequence is MSTDSYTPSQEPGSKRLKTGESVFARRGVSPSTGGVASAYGNESEKKPSWLQTNKSDIDGKYDKYGERRNAHTTTRDSRLDRLKRVRQKSAEREDVGHEGDEGDEDEGILPYIHLQAANPAIIHNEKQENYRTFQSRISNRENRDINSIVRAHYNQRTQQAKQQGSRVNSPIYKMRNFNNAIKYILLGNWAKHNPEELDLFSFLDLCCGKGGDLNKCQFIGIDQYIGIDIADLSVKEAFERYTKQKARFRHSNQNSNRYTFEACFATGDCFTQFVPDILEPNFPGIIERAFPVDIVSAQFSLHYSFESEEKVRTLLTNVTRSLRSGGTFIGTIPSSDFIKAKIVDKHLQRDEKGKAKFGNSLYSVTFEKDPPEDGVFRPAFGNKYNYWLKDAVDNVPEYVVPFETLRSLCEEYDLVLKYKKSFTDIFNQEIPKYFSKLNKNLIDGMKRSDGKYGAEGDEKEAVAFYIGFVFEKV.

The span at 1–12 (MSTDSYTPSQEP) shows a compositional bias: polar residues. Positions 1–106 (MSTDSYTPSQ…GHEGDEGDED (106 aa)) are disordered. Basic and acidic residues predominate over residues 56-100 (SDIDGKYDKYGERRNAHTTTRDSRLDRLKRVRQKSAEREDVGHEG). Residues 170–474 (SPIYKMRNFN…FYIGFVFEKV (305 aa)) enclose the mRNA cap 0 methyltransferase domain. 179 to 180 (NN) contacts mRNA. S-adenosyl-L-methionine contacts are provided by lysine 183, cysteine 207, aspartate 229, aspartate 269, glutamine 299, and tyrosine 304.

The protein belongs to the class I-like SAM-binding methyltransferase superfamily. mRNA cap 0 methyltransferase family.

The protein localises to the nucleus. The catalysed reaction is a 5'-end (5'-triphosphoguanosine)-ribonucleoside in mRNA + S-adenosyl-L-methionine = a 5'-end (N(7)-methyl 5'-triphosphoguanosine)-ribonucleoside in mRNA + S-adenosyl-L-homocysteine. Its function is as follows. Responsible for methylating the 5'-cap structure of mRNAs. The polypeptide is mRNA cap guanine-N(7) methyltransferase (ABD1) (Candida albicans (strain SC5314 / ATCC MYA-2876) (Yeast)).